The primary structure comprises 372 residues: NAD(P)H-quinone oxidoreductase subunit 1, chloroplastic (372 aa).

8 helical membrane passes run 28–48 (IWIC…VLVI), 65–85 (PEYA…KLIL), 97–117 (WLFT…YLVV), 128–148 (IGIG…GLLI), 166–186 (AAQA…IILM), 254–274 (FGLF…FVSV), 312–332 (GIIG…LAVL), and 352–372 (FLLP…ITLL).

This sequence belongs to the complex I subunit 1 family. NDH is composed of at least 16 different subunits, 5 of which are encoded in the nucleus.

The protein localises to the plastid. It localises to the chloroplast thylakoid membrane. It carries out the reaction a plastoquinone + NADH + (n+1) H(+)(in) = a plastoquinol + NAD(+) + n H(+)(out). The enzyme catalyses a plastoquinone + NADPH + (n+1) H(+)(in) = a plastoquinol + NADP(+) + n H(+)(out). Functionally, NDH shuttles electrons from NAD(P)H:plastoquinone, via FMN and iron-sulfur (Fe-S) centers, to quinones in the photosynthetic chain and possibly in a chloroplast respiratory chain. The immediate electron acceptor for the enzyme in this species is believed to be plastoquinone. Couples the redox reaction to proton translocation, and thus conserves the redox energy in a proton gradient. This Staurastrum punctulatum (Green alga) protein is NAD(P)H-quinone oxidoreductase subunit 1, chloroplastic.